The chain runs to 713 residues: MKYTISPQLVIYVGKGQEIKRALYLTPYGILDDKSSIYYFLKTHLNIHNPEIHKRHILLTLKIRQVKGYLSNLLNINDDIIIYSHKNNLEFSYVDNTIFNPFTNTQRKTLIRSDGFLYNIYPGACDFLVIWVTNSKDTPMLEFGSYEEVDSNILKFENHLLDVFNSLDLEMNIESKFNNIFRTNLKSTGLMTIIKKINESDTSYKSLLYKSDEYFINMTGNHFILTDEKLNLSVWDSDSCLAFSSDGDTIVINNVKLFTELVSDINAQMERIKGDVTYKVFLSTPITSRIKLDIETSFVFVETATNNILLSADKKISIILAKNHISIKVKNYIPNIEKYFTFLVVAINSMFNSVQRSSDFTKVETVYWSRICQNTNNKNRKPVIVSSLDVDMKKISNCFYKSKSLEVFINSNGVMFSCIDPMGKYNSIGFLSIFYKLQKMCIPCCFLKDQSHTDTFSSCVYNKDVSNDIISPYILNFGKVVTKSKISFLPIIFDSFLNEGLRISFEQDNKRLKETTGYHVVKSCNGDIIRLRTTSDIIAFVNDKNTILIADDIIYFPMNYFSIGNNIYILVQEIVHEVVLVKKKINKDVISTFSPNSIILRELFPKQTKSVTIRSDSGMELTTDGFLIDGVKFNKDLSSKFMTFTKNVTTSDYISKYFSPLFKYVITESKERFIKTWVINIMLNFESDVNIESSVIISRLEEYYPNHGKKITN.

The protein belongs to the poxviridae VETF large subunit family. In terms of assembly, heterodimer of a 70 kDa and a 82 kDa subunit. Part of the early transcription complex composed of ETF, RAP94, and the DNA-directed RNA polymerase.

In terms of biological role, acts with RNA polymerase to initiate transcription from early gene promoters. Is recruited by the RPO-associated protein of 94 kDa (RAP94) to form the early transcription complex, which also contains the core RNA polymerase. ETF heterodimer binds to early gene promoters. This is Early transcription factor 82 kDa subunit (VETFL) from Yaba monkey tumor virus (strain VR587) (YMTV).